Here is a 189-residue protein sequence, read N- to C-terminus: Putative manganese efflux pump MntP (189 aa).

The next 6 membrane-spanning stretches (helical) occupy residues leucine 3 to glycine 23, leucine 41 to alanine 61, isoleucine 65 to isoleucine 85, phenylalanine 104 to glycine 124, isoleucine 132 to leucine 152, and isoleucine 167 to leucine 187.

This sequence belongs to the MntP (TC 9.B.29) family.

It is found in the cell inner membrane. Its function is as follows. Probably functions as a manganese efflux pump. The sequence is that of Putative manganese efflux pump MntP from Yersinia pseudotuberculosis serotype O:1b (strain IP 31758).